The chain runs to 516 residues: Polyprenol-phosphate-mannose--protein mannosyltransferase (516 aa).

The span at 1 to 11 (MTALDTDTPTA) shows a compositional bias: polar residues. The disordered stretch occupies residues 1-23 (MTALDTDTPTAGRSAPLISPGPV). The next 9 membrane-spanning stretches (helical) occupy residues 113 to 133 (YNGL…VMLV), 143 to 163 (STLV…SFVS), 166 to 186 (TALL…CLMV), 234 to 254 (WSGL…DAIA), 275 to 295 (AAYV…APWF), 384 to 404 (VMLV…GWAL), 413 to 433 (WRYG…FADI), 437 to 457 (MYFF…ALIL), and 473 to 493 (LGLL…AWMY).

The protein belongs to the glycosyltransferase 39 family.

It localises to the cell membrane. The protein operates within protein modification; protein glycosylation. Its function is as follows. Protein O-mannosyltransferase that catalyzes the transfer of a single mannose residue from a polyprenol phospho-mannosyl lipidic donor to the hydroxyl group of selected serine and threonine residues in acceptor proteins. Involved in DNA conjugation, in at least the recipient strain. This Mycolicibacterium smegmatis (strain MKD8) (Mycobacterium smegmatis) protein is Polyprenol-phosphate-mannose--protein mannosyltransferase (pmt).